A 598-amino-acid polypeptide reads, in one-letter code: NADH-quinone oxidoreductase subunit C/D (598 aa).

Positions 1–189 are NADH dehydrogenase I subunit C; the sequence is MTDQIAQNSA…DPYVLTKQKE (189 aa). The interval 213–598 is NADH dehydrogenase I subunit D; the sequence is DFMFLNLGPN…IDFVMSDVDR (386 aa).

In the N-terminal section; belongs to the complex I 30 kDa subunit family. This sequence in the C-terminal section; belongs to the complex I 49 kDa subunit family. As to quaternary structure, NDH-1 is composed of 13 different subunits. Subunits NuoB, CD, E, F, and G constitute the peripheral sector of the complex.

The protein localises to the cell inner membrane. It carries out the reaction a quinone + NADH + 5 H(+)(in) = a quinol + NAD(+) + 4 H(+)(out). In terms of biological role, NDH-1 shuttles electrons from NADH, via FMN and iron-sulfur (Fe-S) centers, to quinones in the respiratory chain. The immediate electron acceptor for the enzyme in this species is believed to be ubiquinone. Couples the redox reaction to proton translocation (for every two electrons transferred, four hydrogen ions are translocated across the cytoplasmic membrane), and thus conserves the redox energy in a proton gradient. The chain is NADH-quinone oxidoreductase subunit C/D from Proteus mirabilis (strain HI4320).